A 342-amino-acid chain; its full sequence is UDP-N-acetylenolpyruvoylglucosamine reductase (342 aa).

Positions 13-183 constitute an FAD-binding PCMH-type domain; that stretch reads IDHCAKHIVC…VAVGLRLSKQ (171 aa). Residue arginine 159 is part of the active site. The active-site Proton donor is the serine 229. Glutamate 325 is a catalytic residue.

This sequence belongs to the MurB family. FAD is required as a cofactor.

The protein resides in the cytoplasm. It carries out the reaction UDP-N-acetyl-alpha-D-muramate + NADP(+) = UDP-N-acetyl-3-O-(1-carboxyvinyl)-alpha-D-glucosamine + NADPH + H(+). It participates in cell wall biogenesis; peptidoglycan biosynthesis. Its function is as follows. Cell wall formation. This Salmonella typhi protein is UDP-N-acetylenolpyruvoylglucosamine reductase.